The sequence spans 392 residues: MDAALLLNVEGVKKTILHGGTGELPNFITGSRVIFHFRTMKCDEERTVIDDSRQVDQPMHIIIGNMFKLEVWEILLTSMRVHEVAEFWCDTIHTGVYPILSRSLRQMAQGKDPTEWHVHTCGLANMFAYHTLGYEDLDELQKEPQPLIFVIELLQVDAPSDYQRETWNLSNHEKMKVVPVLHGEGNRLFKLGRYEEASSKYQEAIICLRNLQTKEKPWEVQWLKLEKMINTLTLNYCQCLLKKEEYYEVLEHTSDILRHHPGIVKAYYVRARAHAEVWNEAEAKADLQKVLELEPSMQKAVRRELRLLENRMAEKQEEERLRCRNMLSQGATQPPAEPPAQPPTAPPAELSTGPPADPPAEPPTAPPAELSTGPPAEPPAELPLSPGHSLQH.

A PPIase FKBP-type domain is found at 53 to 145 (RQVDQPMHII…DLDELQKEPQ (93 aa)). TPR repeat units follow at residues 178–211 (VPVL…LRNL), 230–263 (NTLT…HPGI), and 264–297 (VKAY…EPSM). The interval 329–392 (QGATQPPAEP…PLSPGHSLQH (64 aa)) is disordered. Composition is skewed to pro residues over residues 335–346 (PAEPPAQPPTAP) and 355–366 (PADPPAEPPTAP).

Interacts with NUB1.

The protein localises to the cytoplasm. It localises to the nucleus. In terms of biological role, may be important in protein trafficking and/or protein folding and stabilization. This Macaca mulatta (Rhesus macaque) protein is Aryl-hydrocarbon-interacting protein-like 1 (AIPL1).